The primary structure comprises 415 residues: D-threonate kinase (415 aa).

Residues Asp-9, Arg-53, and 81-84 each bind substrate; that span reads KIDS. ATP-binding positions include Ser-251, 345-348, and Gly-392; that span reads GGET.

The protein belongs to the four-carbon acid sugar kinase family.

It carries out the reaction D-threonate + ATP = 4-O-phospho-D-threonate + ADP + H(+). In terms of biological role, catalyzes the ATP-dependent phosphorylation of D-threonate to D-threonate 4-phosphate. Can also phosphorylate 4-hydroxy-L-threonine, with lower efficiency. The protein is D-threonate kinase of Cupriavidus necator (strain ATCC 17699 / DSM 428 / KCTC 22496 / NCIMB 10442 / H16 / Stanier 337) (Ralstonia eutropha).